We begin with the raw amino-acid sequence, 357 residues long: Cinnamyl alcohol dehydrogenase 5 (357 aa).

Cys-47 contributes to the Zn(2+) binding site. Thr-49 serves as a coordination point for NADP(+). Positions 69, 70, 100, 103, 106, 114, and 163 each coordinate Zn(2+). Residues Thr-167, 188–193 (GLGGVG), 211–216 (SSSNKK), Thr-251, Gly-275, and 298–300 (SFI) each bind NADP(+).

This sequence belongs to the zinc-containing alcohol dehydrogenase family. As to quaternary structure, homodimer. Zn(2+) serves as cofactor. Expressed at the lateral root initiation sites, in the vascular tissues of the primary lateral root and the root caps. Expressed in the hypocotyl, cotyledon and leaf veins, apical meristem region, at the base of the trichomes, hydathodes and cauline leaves. In stems, expressed in the cells associated with the vascular cambium, interfascicular cambium and the developing xylem. Expressed in the vascular strand of petals and sepals, anthers, stamen filaments, stigma in flowers, and abscission, style and stigmatic regions of siliques.

It catalyses the reaction (E)-cinnamyl alcohol + NADP(+) = (E)-cinnamaldehyde + NADPH + H(+). It carries out the reaction (E)-coniferol + NADP(+) = (E)-coniferaldehyde + NADPH + H(+). The catalysed reaction is (E)-sinapyl alcohol + NADP(+) = (E)-sinapaldehyde + NADPH + H(+). The enzyme catalyses (E)-4-coumaroyl alcohol + NADP(+) = (E)-4-coumaraldehyde + NADPH + H(+). It catalyses the reaction (E)-caffeyl alcohol + NADP(+) = (E)-caffeyl aldehyde + NADPH + H(+). The protein operates within aromatic compound metabolism; phenylpropanoid biosynthesis. Functionally, involved in lignin biosynthesis in the floral stem. Catalyzes the final step specific for the production of lignin monomers. Catalyzes the NADPH-dependent reduction of coniferaldehyde, 5-hydroxyconiferaldehyde, sinapaldehyde, 4-coumaraldehyde and caffeyl aldehyde to their respective alcohols. The protein is Cinnamyl alcohol dehydrogenase 5 of Arabidopsis thaliana (Mouse-ear cress).